The chain runs to 200 residues: Probable molybdenum cofactor guanylyltransferase (200 aa).

GTP is bound by residues 9-11, K21, D69, and D100; that span reads LAG. Residue D100 coordinates Mg(2+).

This sequence belongs to the MobA family. Mg(2+) is required as a cofactor.

It localises to the cytoplasm. It catalyses the reaction Mo-molybdopterin + GTP + H(+) = Mo-molybdopterin guanine dinucleotide + diphosphate. Transfers a GMP moiety from GTP to Mo-molybdopterin (Mo-MPT) cofactor (Moco or molybdenum cofactor) to form Mo-molybdopterin guanine dinucleotide (Mo-MGD) cofactor. The protein is Probable molybdenum cofactor guanylyltransferase of Bacillus anthracis (strain CDC 684 / NRRL 3495).